The primary structure comprises 65 residues: MKTTILVVILGLTLLFALSAATELKDEERDCKGFQVKCKKDSECCSSYVCGRQWKWCVYPSPFGR.

Positions 1 to 21 (MKTTILVVILGLTLLFALSAA) are cleaved as a signal peptide. A propeptide spanning residues 22–29 (TELKDEER) is cleaved from the precursor. Cystine bridges form between Cys31–Cys45, Cys38–Cys50, and Cys44–Cys57.

Belongs to the neurotoxin 10 (Hwtx-1) family. 32 (Jztx-16) subfamily. In terms of tissue distribution, expressed by the venom gland.

Its subcellular location is the secreted. Probable ion channel inhibitor. This Chilobrachys guangxiensis (Chinese earth tiger tarantula) protein is U11-theraphotoxin-Cg1b.